Consider the following 1089-residue polypeptide: Ankyrin repeat and IBR domain-containing protein 1 (1089 aa).

Gly-2 carries the N-myristoyl glycine lipid modification. 2 ANK repeats span residues 45–74 (QHNT…NPNK) and 144–173 (KKNT…DLFA). The interval 281–321 (CQRSGVQMPTPPPSGYNAWDTLPSPRTPRTTRSSVTSPDEI) is disordered. The span at 303–318 (PSPRTPRTTRSSVTSP) shows a compositional bias: low complexity. Positions 329–569 (DTSLCDICMC…GGYYRCTRYE (241 aa)) are TRIAD supradomain. Positions 333, 336, 351, 353, 356, 359, 378, 383, 465, 468, 473, 478, 519, and 522 each coordinate Zn(2+). An RING-type 1 zinc finger spans residues 333 to 383 (CDICMCSISVFEDPVDMPCGHDFCRGCWESFLNLKIQEGEAHNIFCPAYDC). Residues 401–478 (DKRYLQFDIK…LGEAHEPCDC (78 aa)) form an IBR-type zinc finger. The RING-type 2; atypical zinc-finger motif lies at 519–548 (CANCKSPIQKNEGCNHMQCAKCKYDFCWIC). The active site involves Cys-532. Positions 537, 540, 545, 548, 555, and 565 each coordinate Zn(2+). Residues 575–640 (EEQSKEMTVE…RALKETEGGC (66 aa)) adopt a coiled-coil conformation. Position 737 is a phosphoserine (Ser-737). Residues 776–821 (RRGDVHSLLSNPPDPDEPSESTLDIPEGGSSSRRPGTSVVSSASMS) form a disordered region. Positions 851 to 870 (EDDPNILLAIQLSLQESGLA) constitute a UIM domain. Ser-884 and Ser-911 each carry phosphoserine. 3 disordered regions span residues 889–912 (GTSL…ALSS), 927–964 (AEND…QDPN), and 1026–1089 (DASV…VHLV). Composition is skewed to polar residues over residues 931 to 941 (PFSTDTLSSHP) and 1070 to 1082 (DVSS…SSDW).

It belongs to the RBR family.

The enzyme catalyses [E2 ubiquitin-conjugating enzyme]-S-ubiquitinyl-L-cysteine + [acceptor protein]-L-lysine = [E2 ubiquitin-conjugating enzyme]-L-cysteine + [acceptor protein]-N(6)-ubiquitinyl-L-lysine.. Its function is as follows. Might act as an E3 ubiquitin-protein ligase, or as part of E3 complex, which accepts ubiquitin from specific E2 ubiquitin-conjugating enzymes and then transfers it to substrates. The sequence is that of Ankyrin repeat and IBR domain-containing protein 1 (ANKIB1) from Homo sapiens (Human).